Here is a 205-residue protein sequence, read N- to C-terminus: Listeria nuclear targeted protein A (205 aa).

The N-terminal stretch at M1–D36 is a signal peptide.

In terms of assembly, interacts specifically with host BAHD1.

It is found in the secreted. The protein localises to the host nucleus. In terms of biological role, relieves the repression of host cell immune response genes (interferon-stimulated genes) by blocking the recruitment of host BAHD1 to these genes. May modulate interferon-mediated immune response to control bacterial colonization of the host. This chain is Listeria nuclear targeted protein A (lntA), found in Listeria monocytogenes serovar 1/2a (strain ATCC BAA-679 / EGD-e).